Reading from the N-terminus, the 197-residue chain is Thymidine kinase (197 aa).

ATP-binding positions include 9 to 16 and 83 to 86; these read AAMNAGKS and DESQ. The active-site Proton acceptor is glutamate 84. Zn(2+)-binding residues include cysteine 141, cysteine 143, cysteine 178, and cysteine 181.

It belongs to the thymidine kinase family. In terms of assembly, homotetramer.

It localises to the cytoplasm. It carries out the reaction thymidine + ATP = dTMP + ADP + H(+). The sequence is that of Thymidine kinase from Albidiferax ferrireducens (strain ATCC BAA-621 / DSM 15236 / T118) (Rhodoferax ferrireducens).